The sequence spans 131 residues: Olfactory receptor-like protein COR9 (131 aa).

At 1-16 the chain is on the cytoplasmic side; that stretch reads VAICSPLLYSTVMTKR. The helical transmembrane segment at 17-41 threads the bilayer; that stretch reads VCMQLVVGSYMGGLLNSLTHTCGLL. The Extracellular segment spans residues 42–82; the sequence is GLPFCGPNVINHYFCDIPPLLQLACSDTHRNETLLLAFSAV. Residue N72 is glycosylated (N-linked (GlcNAc...) asparagine). The chain crosses the membrane as a helical span at residues 83 to 103; that stretch reads IALFTLFVITASYMLILSVIL. Residues 104–116 are Cytoplasmic-facing; that stretch reads KIQSDDGRKKTFH. Residues 117–131 form a helical membrane-spanning segment; it reads TCASHLTAITIFFGS.

It belongs to the G-protein coupled receptor 1 family.

It localises to the cell membrane. Its function is as follows. Odorant receptor. In Gallus gallus (Chicken), this protein is Olfactory receptor-like protein COR9 (COR9).